Consider the following 411-residue polypeptide: UPF0761 membrane protein PA0951 (411 aa).

A run of 6 helical transmembrane segments spans residues 36-56, 92-112, 132-152, 174-194, 207-229, and 244-264; these read LFAV…IPAF, HLTW…LVTI, FLLY…GFAV, LLGL…YSAV, GGVF…VSLF, and IFLL…VLVC.

This sequence belongs to the UPF0761 family.

It is found in the cell inner membrane. In Pseudomonas aeruginosa (strain ATCC 15692 / DSM 22644 / CIP 104116 / JCM 14847 / LMG 12228 / 1C / PRS 101 / PAO1), this protein is UPF0761 membrane protein PA0951.